The following is a 42-amino-acid chain: uncharacterized protein (42 aa).

The helical transmembrane segment at 5–27 (FLHTNITIIPHSVLYVSLSYYII) threads the bilayer.

The protein resides in the membrane. This is an uncharacterized protein from Saccharomyces cerevisiae (strain ATCC 204508 / S288c) (Baker's yeast).